Consider the following 396-residue polypeptide: Activity-regulated cytoskeleton-associated protein (396 aa).

Residues 54 to 78 (SKQVERELKGLHRSVGKLESNLDGY) are a coiled coil. Residues 89–100 (KSIKACLCRCQE) are interaction with SH3GL1 or SH3GL3. Residues 195 to 214 (QPWVPGEDGQPSPGVDTQIF) form an interaction with DNM2 region. S260 is modified (phosphoserine). Glycyl lysine isopeptide (Lys-Gly) (interchain with G-Cter in ubiquitin) cross-links involve residues K268 and K269. Position 278 is a phosphothreonine (T278). The tract at residues 356 to 396 (QDDLEQAAEPAGPHLPVEDEAETLTPAPNSESVASDRTQPE) is disordered. Residues 381-396 (PAPNSESVASDRTQPE) are compositionally biased toward polar residues.

The protein belongs to the ARC/ARG3.1 family. In terms of assembly, homooligomer; homooligomerizes into virion-like capsids. Interacts with SH3GL1/endophilin-2, SH3GL3/endophilin-3 and DNM2/DYN2. Interacts with CAMK2B (in the kinase inactive state); leading to target ARC to inactive synapses. Interacts with PSEN1. In terms of processing, palmitoylation anchors the protein into the membrane by allowing direct insertion into the hydrophobic core of the lipid bilayer. Ubiquitinated by UBE3A, leading to its degradation by the proteasome, thereby promoting AMPA receptors (AMPARs) expression at synapses. Ubiquitinated by RNF216 at Lys-268 and Lys-269 limiting ARC protein levels induced by synaptic activity and thus regulating ARC-dependent forms of synaptic plasticity. Post-translationally, phosphorylation at Ser-260 by CaMK2 prevents homooligomerization into virion-like capsids by disrupting an interaction surface essential for high-order oligomerization. Phosphorylation by CaMK2 inhibits synaptic activity.

The protein localises to the extracellular vesicle membrane. It is found in the postsynaptic cell membrane. It localises to the synapse. Its subcellular location is the postsynaptic density. The protein resides in the early endosome membrane. The protein localises to the cell projection. It is found in the dendrite. It localises to the cytoplasm. Its subcellular location is the cytoskeleton. The protein resides in the cell cortex. The protein localises to the dendritic spine. It is found in the cytoplasmic vesicle. It localises to the secretory vesicle. Its subcellular location is the acrosome. The protein resides in the clathrin-coated vesicle membrane. In terms of biological role, master regulator of synaptic plasticity that self-assembles into virion-like capsids that encapsulate RNAs and mediate intercellular RNA transfer in the nervous system. ARC protein is released from neurons in extracellular vesicles that mediate the transfer of ARC mRNA into new target cells, where ARC mRNA can undergo activity-dependent translation. ARC capsids are endocytosed and are able to transfer ARC mRNA into the cytoplasm of neurons. Acts as a key regulator of synaptic plasticity: required for protein synthesis-dependent forms of long-term potentiation (LTP) and depression (LTD) and for the formation of long-term memory. Regulates synaptic plasticity by promoting endocytosis of AMPA receptors (AMPARs) in response to synaptic activity: this endocytic pathway maintains levels of surface AMPARs in response to chronic changes in neuronal activity through synaptic scaling, thereby contributing to neuronal homeostasis. Acts as a postsynaptic mediator of activity-dependent synapse elimination in the developing cerebellum by mediating elimination of surplus climbing fiber synapses. Accumulates at weaker synapses, probably to prevent their undesired enhancement. This suggests that ARC-containing virion-like capsids may be required to eliminate synaptic material. Required to transduce experience into long-lasting changes in visual cortex plasticity and for long-term memory. Involved in postsynaptic trafficking and processing of amyloid-beta A4 (APP) via interaction with PSEN1. In addition to its role in synapses, also involved in the regulation of the immune system: specifically expressed in skin-migratory dendritic cells and regulates fast dendritic cell migration, thereby regulating T-cell activation. The protein is Activity-regulated cytoskeleton-associated protein of Homo sapiens (Human).